The primary structure comprises 266 residues: Apolipoprotein A-I (266 aa).

The first 18 residues, 1–18 (MKAVVLTLAVLFLTGSQA), serve as a signal peptide directing secretion. A run of 2 repeats spans residues 67–88 (LKLLDNWDSLSSTVAKLREQIG) and 89–110 (PVTQEFWDNLEKETEVLRQEMN). The interval 67–266 (LKLLDNWDSL…DEATKKLNSQ (200 aa)) is 10 X approximate tandem repeats. The residue at position 109 (Met-109) is a Methionine sulfoxide. A 3; half-length repeat occupies 111 to 121 (KDLEEVKKKVQ). Repeat copies occupy residues 122 to 143 (PYLDEFQSKWHEEVELYRQKVA), 144 to 165 (PLGAELREGARQKLQELQEKLS), 166 to 187 (PLGEELRDRARTHVDALRAQLA), 188 to 209 (PYGEQLRERLAARLQALKEGGG), and 210 to 231 (AALTEYRAKASEHLSALREKAK). The 9; half-length repeat unit spans residues 232-242 (PALEDLRQGLL). Repeat 10 spans residues 243 to 266 (PVLENFRVSLLAAVDEATKKLNSQ).

Belongs to the apolipoprotein A1/A4/E family. Homodimer. Interacts with APOA1BP and CLU. Component of a sperm activating protein complex (SPAP), consisting of APOA1, an immunoglobulin heavy chain, an immunoglobulin light chain and albumin. Interacts with NDRG1. Interacts with SCGB3A2. Interacts with NAXE and YJEFN3. Post-translationally, glycosylated. Palmitoylated. In terms of processing, phosphorylation sites are present in the extracellular medium.

It localises to the secreted. In terms of biological role, participates in the reverse transport of cholesterol from tissues to the liver for excretion by promoting cholesterol efflux from tissues and by acting as a cofactor for the lecithin cholesterol acyltransferase (LCAT). As part of the SPAP complex, activates spermatozoa motility. The polypeptide is Apolipoprotein A-I (APOA1) (Leptonychotes weddellii (Weddell seal)).